We begin with the raw amino-acid sequence, 91 residues long: Acylphosphatase (91 aa).

An Acylphosphatase-like domain is found at 5–91 (CLHAYVGGRV…QGIAGFIVRR (87 aa)). Active-site residues include R20 and N38.

The protein belongs to the acylphosphatase family.

It catalyses the reaction an acyl phosphate + H2O = a carboxylate + phosphate + H(+). The polypeptide is Acylphosphatase (acyP) (Pseudomonas paraeruginosa (strain DSM 24068 / PA7) (Pseudomonas aeruginosa (strain PA7))).